Here is a 1035-residue protein sequence, read N- to C-terminus: Isoleucine--tRNA ligase (1035 aa).

Residues proline 48–histidine 58 carry the 'HIGH' region motif. The short motif at lysine 589 to histidine 593 is the 'KMSKS' region element. Position 592 (lysine 592) interacts with ATP.

Belongs to the class-I aminoacyl-tRNA synthetase family. IleS type 2 subfamily. In terms of assembly, monomer. Zn(2+) is required as a cofactor.

The protein resides in the cytoplasm. It catalyses the reaction tRNA(Ile) + L-isoleucine + ATP = L-isoleucyl-tRNA(Ile) + AMP + diphosphate. Functionally, catalyzes the attachment of isoleucine to tRNA(Ile). As IleRS can inadvertently accommodate and process structurally similar amino acids such as valine, to avoid such errors it has two additional distinct tRNA(Ile)-dependent editing activities. One activity is designated as 'pretransfer' editing and involves the hydrolysis of activated Val-AMP. The other activity is designated 'posttransfer' editing and involves deacylation of mischarged Val-tRNA(Ile). This Clostridium acetobutylicum (strain ATCC 824 / DSM 792 / JCM 1419 / IAM 19013 / LMG 5710 / NBRC 13948 / NRRL B-527 / VKM B-1787 / 2291 / W) protein is Isoleucine--tRNA ligase.